The sequence spans 1230 residues: SAM and SH3 domain-containing protein 1 (1230 aa).

A compositionally biased stretch (low complexity) spans 1–10 (MEEDAGAASP). The segment at 1–30 (MEEDAGAASPAPEPEPEVDPARELEPEAGV) is disordered. A phosphoserine mark is found at Ser-83 and Ser-241. 2 disordered regions span residues 211-249 (RQSS…EDSV) and 275-337 (KKPS…LDTW). Positions 275–297 (KKPSAEGGEEHVFENSPVQDERS) are enriched in basic and acidic residues. The span at 324–336 (SLTPSPSSSSLDT) shows a compositional bias: low complexity. The residue at position 400 (Ser-400) is a Phosphoserine. 3 disordered regions span residues 439-566 (PRIS…YDTD), 610-633 (EEKP…SVED), and 705-792 (VDNQ…KSCD). Residues 461–470 (KYSSPVSEQD) show a composition bias toward polar residues. Positions 485-494 (PDSEHVDKPK) are enriched in basic and acidic residues. Residues 498-516 (GGSVESLRSSLSGQSSMSG) show a composition bias toward low complexity. A compositionally biased stretch (polar residues) spans 517–529 (QTVSTTDSSTSNR). Positions 547–608 (PFCGRARVHT…KFIYVDVLNE (62 aa)) constitute an SH3 domain. Basic residues predominate over residues 615 to 624 (RPTRRRKKGR). Residues 626–690 (SQPKSVEDLL…LTAVELLQEY (65 aa)) enclose the SAM 1 domain. Positions 737 to 758 (VLSTKSSTESNLKSFTRSQPGN) are enriched in polar residues. A compositionally biased stretch (basic and acidic residues) spans 768-779 (GEVRKQGEEGRL). 2 positions are modified to phosphoserine: Ser-813 and Ser-831. 2 disordered regions span residues 818–875 (EGPE…LPRG) and 915–1045 (PPQC…PWLA). A required for interaction with TRAF6 region spans residues 844-852 (NVPTEMPET). The span at 852–868 (TCSQNVPEVPQKTSACT) shows a compositional bias: polar residues. Basic and acidic residues predominate over residues 940 to 956 (GLRKGHDHHPLGTKEGV). Positions 962–972 (APETRTQSRHP) are enriched in polar residues. Residues 1008–1019 (SPASPVSPSDCP) show a composition bias toward low complexity. The 65-residue stretch at 1160 to 1224 (GCVASMSDWL…ITAARLFKLP (65 aa)) folds into the SAM 2 domain.

In terms of assembly, interacts with GNAS. Interacts with IQGAP1. Interacts with TRAF6 (via C-terminus); the interaction is LPS-dependent. Interacts with MAP3K7, CHUK and IKBKB. As to expression, expressed in the microvascular endothelium of various organs, as well as in parenchymal cells. Expressed in the endothelium but not lymphoid cells of spleen and thymus.

It localises to the cytoplasm. Functionally, is a positive regulator of NF-kappa-B signaling downstream of TLR4 activation. It acts as a scaffold molecule to assemble a molecular complex that includes TRAF6, MAP3K7, CHUK and IKBKB, thereby facilitating NF-kappa-B signaling activation. Regulates TRAF6 and MAP3K7 ubiquitination. Involved in the regulation of cell mobility. Regulates lipolysaccharide (LPS)-induced endothelial cell migration. Is involved in the regulation of skin pigmentation through the control of melanocyte migration in the epidermis. This chain is SAM and SH3 domain-containing protein 1 (Sash1), found in Mus musculus (Mouse).